The following is a 425-amino-acid chain: Serine hydroxymethyltransferase (425 aa).

Residues Leu-128 and 132–134 (GHL) each bind (6S)-5,6,7,8-tetrahydrofolate. Lys-237 carries the N6-(pyridoxal phosphate)lysine modification.

The protein belongs to the SHMT family. Homodimer. Pyridoxal 5'-phosphate is required as a cofactor.

The protein localises to the cytoplasm. It catalyses the reaction (6R)-5,10-methylene-5,6,7,8-tetrahydrofolate + glycine + H2O = (6S)-5,6,7,8-tetrahydrofolate + L-serine. It participates in one-carbon metabolism; tetrahydrofolate interconversion. It functions in the pathway amino-acid biosynthesis; glycine biosynthesis; glycine from L-serine: step 1/1. Catalyzes the reversible interconversion of serine and glycine with tetrahydrofolate (THF) serving as the one-carbon carrier. This reaction serves as the major source of one-carbon groups required for the biosynthesis of purines, thymidylate, methionine, and other important biomolecules. Also exhibits THF-independent aldolase activity toward beta-hydroxyamino acids, producing glycine and aldehydes, via a retro-aldol mechanism. The chain is Serine hydroxymethyltransferase from Wolbachia pipientis wMel.